The chain runs to 105 residues: Large ribosomal subunit protein uL24 (105 aa).

It belongs to the universal ribosomal protein uL24 family. In terms of assembly, part of the 50S ribosomal subunit.

In terms of biological role, one of two assembly initiator proteins, it binds directly to the 5'-end of the 23S rRNA, where it nucleates assembly of the 50S subunit. One of the proteins that surrounds the polypeptide exit tunnel on the outside of the subunit. The protein is Large ribosomal subunit protein uL24 of Lachnoclostridium phytofermentans (strain ATCC 700394 / DSM 18823 / ISDg) (Clostridium phytofermentans).